We begin with the raw amino-acid sequence, 417 residues long: UDP-N-acetylglucosamine 1-carboxyvinyltransferase (417 aa).

Residue 22–23 (KN) participates in phosphoenolpyruvate binding. R93 lines the UDP-N-acetyl-alpha-D-glucosamine pocket. Residue C117 is the Proton donor of the active site. C117 carries the post-translational modification 2-(S-cysteinyl)pyruvic acid O-phosphothioketal. Residues 122-126 (RPVDQ), D305, and I327 contribute to the UDP-N-acetyl-alpha-D-glucosamine site.

This sequence belongs to the EPSP synthase family. MurA subfamily.

Its subcellular location is the cytoplasm. It catalyses the reaction phosphoenolpyruvate + UDP-N-acetyl-alpha-D-glucosamine = UDP-N-acetyl-3-O-(1-carboxyvinyl)-alpha-D-glucosamine + phosphate. It functions in the pathway cell wall biogenesis; peptidoglycan biosynthesis. Cell wall formation. Adds enolpyruvyl to UDP-N-acetylglucosamine. This chain is UDP-N-acetylglucosamine 1-carboxyvinyltransferase, found in Chromobacterium violaceum (strain ATCC 12472 / DSM 30191 / JCM 1249 / CCUG 213 / NBRC 12614 / NCIMB 9131 / NCTC 9757 / MK).